A 94-amino-acid chain; its full sequence is Aspartyl/glutamyl-tRNA(Asn/Gln) amidotransferase subunit C (94 aa).

The segment at 72-94 (PREKALQGAPEVSEGQFKVPRVV) is disordered.

Belongs to the GatC family. Heterotrimer of A, B and C subunits.

The enzyme catalyses L-glutamyl-tRNA(Gln) + L-glutamine + ATP + H2O = L-glutaminyl-tRNA(Gln) + L-glutamate + ADP + phosphate + H(+). It catalyses the reaction L-aspartyl-tRNA(Asn) + L-glutamine + ATP + H2O = L-asparaginyl-tRNA(Asn) + L-glutamate + ADP + phosphate + 2 H(+). Functionally, allows the formation of correctly charged Asn-tRNA(Asn) or Gln-tRNA(Gln) through the transamidation of misacylated Asp-tRNA(Asn) or Glu-tRNA(Gln) in organisms which lack either or both of asparaginyl-tRNA or glutaminyl-tRNA synthetases. The reaction takes place in the presence of glutamine and ATP through an activated phospho-Asp-tRNA(Asn) or phospho-Glu-tRNA(Gln). This Moorella thermoacetica (strain ATCC 39073 / JCM 9320) protein is Aspartyl/glutamyl-tRNA(Asn/Gln) amidotransferase subunit C.